Consider the following 439-residue polypeptide: Tol-Pal system protein TolB (439 aa).

An N-terminal signal peptide occupies residues 1–22 (MKKPLRWLAALTVLLLPLSALA).

It belongs to the TolB family. As to quaternary structure, the Tol-Pal system is composed of five core proteins: the inner membrane proteins TolA, TolQ and TolR, the periplasmic protein TolB and the outer membrane protein Pal. They form a network linking the inner and outer membranes and the peptidoglycan layer.

The protein resides in the periplasm. Its function is as follows. Part of the Tol-Pal system, which plays a role in outer membrane invagination during cell division and is important for maintaining outer membrane integrity. In Xanthomonas oryzae pv. oryzae (strain MAFF 311018), this protein is Tol-Pal system protein TolB.